The following is a 344-amino-acid chain: Methionine import ATP-binding protein MetN 1 (344 aa).

In terms of domain architecture, ABC transporter spans 2–241; that stretch reads IEIRNISQRF…PHHEVTRALI (240 aa). 38–45 provides a ligand contact to ATP; the sequence is GRSGAGKS.

The protein belongs to the ABC transporter superfamily. Methionine importer (TC 3.A.1.24) family. In terms of assembly, the complex is composed of two ATP-binding proteins (MetN), two transmembrane proteins (MetI) and a solute-binding protein (MetQ).

Its subcellular location is the cell inner membrane. It carries out the reaction L-methionine(out) + ATP + H2O = L-methionine(in) + ADP + phosphate + H(+). The catalysed reaction is D-methionine(out) + ATP + H2O = D-methionine(in) + ADP + phosphate + H(+). Its function is as follows. Part of the ABC transporter complex MetNIQ involved in methionine import. Responsible for energy coupling to the transport system. The chain is Methionine import ATP-binding protein MetN 1 from Paraburkholderia xenovorans (strain LB400).